Consider the following 1275-residue polypeptide: Inner capsid protein lambda-1 (1275 aa).

Basic residues predominate over residues 1-12 (MKRIPRKTRGKS). Residues 1-147 (MKRIPRKTRG…NVDNEGGDNQ (147 aa)) are disordered. Positions 18-35 (DSTERADDGSAQLRDKQS) are enriched in basic and acidic residues. The segment covering 55-66 (TRPSLQTVQKAT) has biased composition (polar residues). Composition is skewed to basic and acidic residues over residues 80–98 (AVDKKGNTKGDKTNEHVEA) and 105–117 (ATKRQAKDTDKQK). The span at 118-139 (AQVTYNDTGINNANELSRSGNV) shows a compositional bias: polar residues. The C2H2-type zinc-finger motif lies at 181–203 (YQCHVCSAVLFSPLDLDAHVASH).

Belongs to the turreted BTV-fold inner capsid family. Homodecamer; each decamer is made up of two conformers of VP2, called VP2A and VP2B. 12 homodecamers assemble to form an icosahedral capsid. Interacts with protein mu-NS; in viral inclusions. Mg(2+) serves as cofactor. Mn(2+) is required as a cofactor.

The protein localises to the virion. It catalyses the reaction ATP + H2O = ADP + phosphate + H(+). In terms of biological role, inner capsid protein that self-assembles to form an icosahedral capsid with a T=2 symmetry, which consists of 120 copies of VP2, with channels at each of its five-fold vertices. This capsid constitutes the innermost concentric layer of the viral mature particle. Functionally, displays NTPase, RNA 5'-triphosphatase (RTPase) and RNA helicase activities and probably participates in transcription of the viral genome. Helicase activity might be involved in unwinding or reannealing dsRNA during RNA synthesis. RTPase enzymatic activity represents the first step in RNA capping, which yields a 5'-diphosphorylated plus-strand RNA. The polypeptide is Inner capsid protein lambda-1 (Reovirus type 2 (strain D5/Jones) (T2J)).